Reading from the N-terminus, the 520-residue chain is Cytochrome P450 734A1 (520 aa).

A helical membrane pass occupies residues 13–33 (VLVLSVILSLVIVKGMSLLWW). A heme-binding site is contributed by Cys-463.

It belongs to the cytochrome P450 family. Heme is required as a cofactor.

Its subcellular location is the membrane. Cytochrome P450 involved in brassinosteroids (BRs) inactivation and regulation of BRs homeostasis. Inactivates the BRs castasterone (CS) and brassinolide (BL) through carbon 26 hydroxylation. Acts in association with CYP72C1 to inactivate BRs and modulate photomorphogenesis. This is Cytochrome P450 734A1 (CYP734A1) from Arabidopsis thaliana (Mouse-ear cress).